Reading from the N-terminus, the 121-residue chain is Small ribosomal subunit protein uS13 (121 aa).

Positions 92-121 (RRGLPVRGQNSKNNARTRKGPKRTVANKKK) are disordered. Residues 106 to 121 (ARTRKGPKRTVANKKK) are compositionally biased toward basic residues.

The protein belongs to the universal ribosomal protein uS13 family. As to quaternary structure, part of the 30S ribosomal subunit. Forms a loose heterodimer with protein S19. Forms two bridges to the 50S subunit in the 70S ribosome.

Its function is as follows. Located at the top of the head of the 30S subunit, it contacts several helices of the 16S rRNA. In the 70S ribosome it contacts the 23S rRNA (bridge B1a) and protein L5 of the 50S subunit (bridge B1b), connecting the 2 subunits; these bridges are implicated in subunit movement. Contacts the tRNAs in the A and P-sites. The chain is Small ribosomal subunit protein uS13 from Shouchella clausii (strain KSM-K16) (Alkalihalobacillus clausii).